The primary structure comprises 1079 residues: Capping protein inhibiting regulator of actin dynamics (1079 aa).

Residues 1 to 11 (MSQENVSDKVR) are compositionally biased toward basic and acidic residues. 7 disordered regions span residues 1–293 (MSQE…EEER), 308–327 (ERKR…AEKR), 341–383 (EHRI…EWKR), 420–453 (PVTP…PTLS), 493–522 (EGKK…VFES), 606–639 (IFGQ…VQSR), and 658–1054 (PSFL…TTQV). Residues 36-45 (DEGSSDEEEV) show a composition bias toward acidic residues. Residues 64-76 (SAKEKSVSHDTVQ) show a composition bias toward basic and acidic residues. The segment covering 115 to 134 (AKHKLSVKPKNQRVSRKHRR) has biased composition (basic residues). A compositionally biased stretch (acidic residues) spans 140–158 (HEDDFSEIQEEFEKDEEVF). Basic and acidic residues predominate over residues 159–293 (DSSREDYGII…EERKRAEEER (135 aa)). The segment covering 420 to 434 (PVTPATGQQGETTAE) has biased composition (polar residues). Polar residues predominate over residues 670–682 (PKSQRSESGSPIQ). The segment covering 684 to 695 (ESEDSDTKDEDG) has biased composition (acidic residues). Polar residues predominate over residues 756–781 (DNSTLSEKSSPISPQQENIEFQTTVA). 2 stretches are compositionally biased toward basic and acidic residues: residues 896-930 (WREK…DKET) and 944-983 (GFRE…EDKG). Residues 984 to 993 (NGSSSIISKH) are compositionally biased toward polar residues. Residues 994–1016 (QTADENKRPDTLLARFERRDNLK) are compositionally biased toward basic and acidic residues. Residues 1020 to 1033 (TLPSSVTVEITDST) show a composition bias toward polar residues.

Directly interacts with actin-capping proteins; this interaction decreases the binding of capping proteins to actin.

It localises to the cytoplasm. It is found in the cytosol. Functionally, involved in epithelial cell integrity by acting on the maintenance of the actin cytoskeleton. Positively regulates the actin polymerization, by inhibiting the interaction of actin-capping proteins with actin. The protein is Capping protein inhibiting regulator of actin dynamics (crad) of Danio rerio (Zebrafish).